The following is a 358-amino-acid chain: Porphobilinogen deaminase, chloroplastic (358 aa).

A signal peptide spans 1 to 24; the sequence is MPPPPRCAATTAHHSLLGSPTCLA. C290 bears the S-(dipyrrolylmethanemethyl)cysteine mark.

This sequence belongs to the HMBS family. Dipyrromethane serves as cofactor.

Its subcellular location is the plastid. The protein localises to the chloroplast. It catalyses the reaction 4 porphobilinogen + H2O = hydroxymethylbilane + 4 NH4(+). It participates in porphyrin-containing compound metabolism; protoporphyrin-IX biosynthesis; coproporphyrinogen-III from 5-aminolevulinate: step 2/4. It functions in the pathway porphyrin-containing compound metabolism; chlorophyll biosynthesis. Its function is as follows. Tetrapolymerization of the monopyrrole PBG into the hydroxymethylbilane pre-uroporphyrinogen in several discrete steps. This chain is Porphobilinogen deaminase, chloroplastic (HEMC), found in Oryza sativa subsp. japonica (Rice).